A 186-amino-acid chain; its full sequence is dCTP deaminase (186 aa).

107–112 (KSSYAR) serves as a coordination point for dCTP. Residue glutamate 133 is the Proton donor/acceptor of the active site. Residues glutamine 152, tyrosine 166, and glutamine 176 each coordinate dCTP.

Belongs to the dCTP deaminase family. In terms of assembly, homotrimer.

The catalysed reaction is dCTP + H2O + H(+) = dUTP + NH4(+). Its pathway is pyrimidine metabolism; dUMP biosynthesis; dUMP from dCTP (dUTP route): step 1/2. Its function is as follows. Catalyzes the deamination of dCTP to dUTP. In Chloroflexus aggregans (strain MD-66 / DSM 9485), this protein is dCTP deaminase.